Consider the following 369-residue polypeptide: Glutamate 5-kinase (369 aa).

Lys9 provides a ligand contact to ATP. The substrate site is built by Ser49, Asp136, and Asn148. ATP is bound by residues 168 to 169 (TD) and 210 to 216 (TGGMLTK). In terms of domain architecture, PUA spans 275–355 (QGSIWVDKGA…KGVLIYRDDW (81 aa)).

Belongs to the glutamate 5-kinase family.

The protein localises to the cytoplasm. It catalyses the reaction L-glutamate + ATP = L-glutamyl 5-phosphate + ADP. It functions in the pathway amino-acid biosynthesis; L-proline biosynthesis; L-glutamate 5-semialdehyde from L-glutamate: step 1/2. Functionally, catalyzes the transfer of a phosphate group to glutamate to form L-glutamate 5-phosphate. The polypeptide is Glutamate 5-kinase (Streptococcus pneumoniae (strain Hungary19A-6)).